A 158-amino-acid chain; its full sequence is Sec-independent protein translocase protein TatB (158 aa).

The chain crosses the membrane as a helical span at residues 1-21 (MFDIGWSELLVIGVVALVVVG). The segment at 73–158 (RSMGLDAMKQ…PAPAEPKSNA (86 aa)) is disordered. Over residues 83 to 92 (AADRFEKWDP) the composition is skewed to basic and acidic residues. Composition is skewed to low complexity over residues 94 to 132 (KPQQGAPKPAAPASSIPAAKAQQGAGAAAVTAPPASEPA) and 138 to 158 (APAAAAPEAASPAPAEPKSNA).

Belongs to the TatB family. In terms of assembly, the Tat system comprises two distinct complexes: a TatABC complex, containing multiple copies of TatA, TatB and TatC subunits, and a separate TatA complex, containing only TatA subunits. Substrates initially bind to the TatABC complex, which probably triggers association of the separate TatA complex to form the active translocon.

The protein localises to the cell inner membrane. Its function is as follows. Part of the twin-arginine translocation (Tat) system that transports large folded proteins containing a characteristic twin-arginine motif in their signal peptide across membranes. Together with TatC, TatB is part of a receptor directly interacting with Tat signal peptides. TatB may form an oligomeric binding site that transiently accommodates folded Tat precursor proteins before their translocation. This is Sec-independent protein translocase protein TatB from Cereibacter sphaeroides (strain ATCC 17029 / ATH 2.4.9) (Rhodobacter sphaeroides).